Consider the following 634-residue polypeptide: Extracellular metalloproteinase mep (634 aa).

The signal sequence occupies residues 1-18 (MRGLLLAGALALPASVFA). The propeptide occupies 19-245 (HPAHQSYGLN…IHGVVDYVAE (227 aa)). Asn-286 is a glycosylation site (N-linked (GlcNAc...) asparagine). Residue His-429 coordinates Zn(2+). The active site involves Glu-430. His-433 lines the Zn(2+) pocket.

This sequence belongs to the peptidase M36 family. Zn(2+) serves as cofactor.

It localises to the secreted. Secreted metalloproteinase that allows assimilation of proteinaceous substrates and probably acts as a virulence factor. The polypeptide is Extracellular metalloproteinase mep (mep) (Aspergillus fumigatus (strain CBS 144.89 / FGSC A1163 / CEA10) (Neosartorya fumigata)).